The following is a 1001-amino-acid chain: MDPFVGWFQKEQEGPSLCTWLKIWETNAQEMGALLNQQLQQATTINGSTSSSSSSSNSGNNNNNNNNNIINNTITNTTNNTGNNSSAKPYLSRPYSSLNRVLNFRADSLEILQQQQQQQQLNGTTQRNSTNINTTSGGSTSSSADSTTNRDNNSPANSSSTNGPGAGTGTSTGAGGTGTNSPATTASSTAATTTGPATSMSDTSNNPPQSTTTPASRTNSIYYNPSRKKRPENKAGGAHYYMNNHMEMIAKYKGEPWRKPDYPYGEGVIGLHEEIEHFYQYVLPTPCEHAIRNEVVKRIEAVVHSIWPQAVVEIFGSFRTGLFLPTSDIDLVVLGLWEKLPLRTLEFELVSRGIAEACTVRVLDKASVPIIKLTDRETQVKVDISFNMQSGVQSAELIKKFKRDYPVLEKLVLVLKQFLLLRDLNEVFTGGISSYSLILMCISFLQMHPRGIYHDTANLGVLLLEFFELYGRRFNYMKIGISIKNGGRYMPKDELQRDMVDGHRPSLLCIEDPLTPGNDIGRSSYGVFQVQQAFKCAYRVLALAVSPLNLLGIDPRVNSILGRIIHITDDVIDYREWIRENFEHLVVVDRISPLPTAAPTAYATANGAPKYVIMPSGAVVQQLYHHPVQVPTAHGHSHAHSHSHGHAHPGAHLCQPYVTGTTVSAVTTTTTMAVVTVGVSAGGVQQQQQQQNATAHTHSQQQTQNQSQSRHRRGSTSSGDDSEDSKDGDVVETTSSAQEVVDIALSTPNGLANMSMPMPVHAVGMPASNSWSGNGNGNGNSSSSTGSSPEIAHIAAQEMDPELEDQQQQQQHQETSGGNGFIRPGDVGTGSNRGGGDGSGGRNYNQRNNHNSSGYYHQQYYVPPPMQQQLSKSNSSSNYHQQHHHSHSHGNHSHRQQHHHQQQHHHQQRPQHLRVGGGNRYQKSLGGSPIISAGNASNSSSNCSNSSSSSGSNNSRLPPLRGTLVNSSSAISIISISSESSIASSSSSSSRSGQDQQRDER.

Low complexity-rich tracts occupy residues 44 to 86 (TING…NNSS) and 127 to 163 (RNST…STNG). Disordered stretches follow at residues 44–92 (TING…PYLS) and 115–238 (QQQQ…AGGA). Positions 164–178 (PGAGTGTSTGAGGTG) are enriched in gly residues. A compositionally biased stretch (low complexity) spans 179 to 216 (TNSPATTASSTAATTTGPATSMSDTSNNPPQSTTTPAS). Mn(2+) is bound by residues Asp-328 and Asp-330. Residues 458–517 (NLGVLLLEFFELYGRRFNYMKIGISIKNGGRYMPKDELQRDMVDGHRPSLLCIEDPLTPG) form the PAP-associated domain. 4 disordered regions span residues 631-652 (PTAH…PGAH), 687-740 (QQQQ…AQEV), 767-963 (ASNS…LRGT), and 977-1001 (SSES…RDER). Residues 635–649 (GHSHAHSHSHGHAHP) show a composition bias toward basic residues. Low complexity-rich tracts occupy residues 687–708 (QQQQ…NQSQ) and 768–788 (SNSW…TGSS). The segment covering 827 to 841 (VGTGSNRGGGDGSGG) has biased composition (gly residues). The span at 844 to 854 (YNQRNNHNSSG) shows a compositional bias: polar residues. Low complexity predominate over residues 855 to 880 (YYHQQYYVPPPMQQQLSKSNSSSNYH). Residues 881-912 (QQHHHSHSHGNHSHRQQHHHQQQHHHQQRPQH) show a composition bias toward basic residues. Composition is skewed to low complexity over residues 932–955 (SAGN…SNNS) and 977–992 (SSES…SSRS).

This sequence belongs to the DNA polymerase type-B-like family. Requires Mn(2+) as cofactor.

The protein resides in the cytoplasm. The catalysed reaction is RNA(n) + ATP = RNA(n)-3'-adenine ribonucleotide + diphosphate. Its function is as follows. Involved in a post-transcriptional quality control mechanism limiting inappropriate expression of genetic information. Polyadenylation is required for the degradative activity of the exosome on several of its nuclear RNA substrates. Polyadenylates RNA processing and degradation intermediates of snRNAs and mRNAs. This is Non-canonical poly(A) RNA polymerase protein Trf4-1 from Drosophila melanogaster (Fruit fly).